A 391-amino-acid polypeptide reads, in one-letter code: Multidrug resistance protein MdtL (391 aa).

Transmembrane regions (helical) follow at residues 4 to 24 (FLIC…MYLV), 42 to 62 (IAFS…GKVA), 69 to 89 (PVAI…SLAE), 93 to 113 (LFLA…VVAF), 131 to 151 (LLNG…HLIM), 158 to 178 (SLFW…LFIL), 203 to 222 (FFLS…LTFV), 245 to 265 (ALTA…LGIF), 269 to 289 (TLMI…AVSP), 293 to 313 (VSLF…GVAM), 331 to 351 (LGIA…VVGI), and 356 to 376 (MLIG…MFVA).

It belongs to the major facilitator superfamily. DHA1 family. MdtL (TC 2.A.1.2.22) subfamily.

It localises to the cell inner membrane. Its function is as follows. Confers resistance to chloramphenicol. The chain is Multidrug resistance protein MdtL from Escherichia coli O9:H4 (strain HS).